A 150-amino-acid polypeptide reads, in one-letter code: Regulatory protein RecX (150 aa).

The protein belongs to the RecX family.

The protein localises to the cytoplasm. In terms of biological role, modulates RecA activity. The chain is Regulatory protein RecX from Ectopseudomonas mendocina (strain ymp) (Pseudomonas mendocina).